The chain runs to 568 residues: Urease subunit alpha (568 aa).

One can recognise a Urease domain in the interval 130-568 (GGIDTHIHFI…LPMAQRYFLF (439 aa)). Positions 135, 137, and 218 each coordinate Ni(2+). N6-carboxylysine is present on Lys-218. His-220 is a substrate binding site. Positions 247 and 273 each coordinate Ni(2+). The active-site Proton donor is the His-321. Asp-361 serves as a coordination point for Ni(2+).

The protein belongs to the metallo-dependent hydrolases superfamily. Urease alpha subunit family. In terms of assembly, heterotrimer of UreA (gamma), UreB (beta) and UreC (alpha) subunits. Three heterotrimers associate to form the active enzyme. Ni cation is required as a cofactor. Post-translationally, carboxylation allows a single lysine to coordinate two nickel ions.

Its subcellular location is the cytoplasm. It catalyses the reaction urea + 2 H2O + H(+) = hydrogencarbonate + 2 NH4(+). It functions in the pathway nitrogen metabolism; urea degradation; CO(2) and NH(3) from urea (urease route): step 1/1. This chain is Urease subunit alpha, found in Burkholderia ambifaria (strain ATCC BAA-244 / DSM 16087 / CCUG 44356 / LMG 19182 / AMMD) (Burkholderia cepacia (strain AMMD)).